Here is a 183-residue protein sequence, read N- to C-terminus: Inosine/xanthosine triphosphatase (183 aa).

Residue D75 participates in Mg(2+) binding. Position 75 to 76 (75 to 76 (DG)) interacts with substrate.

Belongs to the YjjX NTPase family. In terms of assembly, homodimer. Mg(2+) is required as a cofactor. It depends on Mn(2+) as a cofactor.

It catalyses the reaction XTP + H2O = XDP + phosphate + H(+). It carries out the reaction ITP + H2O = IDP + phosphate + H(+). Phosphatase that hydrolyzes non-canonical purine nucleotides such as XTP and ITP to their respective diphosphate derivatives. Probably excludes non-canonical purines from DNA/RNA precursor pool, thus preventing their incorporation into DNA/RNA and avoiding chromosomal lesions. The protein is Inosine/xanthosine triphosphatase of Vibrio vulnificus (strain CMCP6).